A 399-amino-acid polypeptide reads, in one-letter code: uncharacterized protein (399 aa).

Over residues 197-206 (ENSSASSVTS) the composition is skewed to polar residues. The segment at 197 to 224 (ENSSASSVTSEECEQDVMDEQSAEDNEE) is disordered. Residues 207–224 (EECEQDVMDEQSAEDNEE) are compositionally biased toward acidic residues.

This is an uncharacterized protein from Diadromus pulchellus (Parasitic wasp).